Consider the following 692-residue polypeptide: Follicle-stimulating hormone receptor (692 aa).

The first 17 residues, 1–17, serve as a signal peptide directing secretion; it reads MALLLVSLLAFLGTGSG. Cystine bridges form between C18/C25 and C23/C32. One can recognise an LRRNT domain in the interval 18–46; it reads CHHWLCHCSNRVFLCQDSKVTEIPTDLPR. Residues 18–365 are Extracellular-facing; that stretch reads CHHWLCHCSN…EDIMGYNILR (348 aa). LRR repeat units follow at residues 49–72, 73–97, 98–118, 119–143, 144–169, 170–192, 193–216, 217–240, and 241–259; these read IELRFVLTKLRVIPKGSFAGFGDL, EKIEISQNDVLEVIEADVFSNLPKL, HEIRIEKANNLLYINPEAFQN, LPSLRYLLISNTGIKHLPAVHKIQS, LQKVLLDIQDNINIHIVARNSFMGLS, FESVILWLSKNGIEEIHNCAFNG, TQLDELNLSDNNNLEELPNDVFQG, ASGPVILDISRTKVHSLPNHGLEN, and LKKLRARSTYRLKKLPNLD. N-linked (GlcNAc...) asparagine glycosylation is found at N191 and N199. Cystine bridges form between C275/C345, C276/C292, C276/C355, and C292/C337. N293 carries N-linked (GlcNAc...) asparagine glycosylation. Y334 is modified (sulfotyrosine). Residues 366–386 traverse the membrane as a helical segment; the sequence is VLIWFISILAITGNTTVLVVL. At 387–397 the chain is on the cytoplasmic side; sequence TTSQYKLTVPR. Residues 398 to 420 form a helical membrane-spanning segment; the sequence is FLMCNLAFADLCIGIYLLLIASV. Residues 421–442 are Extracellular-facing; the sequence is DIHTKSQYHNYAIDWQTGAGCD. Cysteines 441 and 516 form a disulfide. The chain crosses the membrane as a helical span at residues 443 to 464; the sequence is AAGFFTVFASELSVYTLTAITL. Residues 465–484 lie on the Cytoplasmic side of the membrane; sequence ERWHTITHAMQLECKVQLRH. A helical transmembrane segment spans residues 485 to 507; that stretch reads AASVMVLGWTFAFAAALFPIFGI. Residues 508–527 lie on the Extracellular side of the membrane; sequence SSYMKVSICLPMDIDSPLSQ. The helical transmembrane segment at 528–549 threads the bilayer; it reads LYVMALLVLNVLAFVVICGCYT. The Cytoplasmic segment spans residues 550–572; sequence HIYLTVRNPTIVSSSSDTKIAKR. The helical transmembrane segment at 573 to 596 threads the bilayer; that stretch reads MATLIFTDFLCMAPISFFAISASL. Residues 597-607 are Extracellular-facing; the sequence is KVPLITVSKAK. A helical transmembrane segment spans residues 608–629; the sequence is ILLVLFYPINSCANPFLYAIFT. Residues 630–692 are Cytoplasmic-facing; sequence KNFRRDFFIL…LVPLNHSSQN (63 aa).

It belongs to the G-protein coupled receptor 1 family. FSH/LSH/TSH subfamily. In terms of assembly, homotrimer. Functions as a homotrimer binding the FSH hormone heterodimer composed of CGA and FSHB. Interacts with ARRB2. Interacts with APPL2; interaction is independent of follicle stimulating hormone stimulation. N-glycosylated; indirectly required for FSH-binding, possibly via a conformational change that allows high affinity binding of hormone. Post-translationally, sulfated. Sertoli cells and ovarian granulosa cells.

It is found in the cell membrane. Its function is as follows. G protein-coupled receptor for follitropin, the follicle-stimulating hormone. Through cAMP production activates the downstream PI3K-AKT and ERK1/ERK2 signaling pathways. The sequence is that of Follicle-stimulating hormone receptor (Fshr) from Rattus norvegicus (Rat).